Consider the following 313-residue polypeptide: Ribosomal RNA small subunit methyltransferase H (313 aa).

S-adenosyl-L-methionine contacts are provided by residues 35 to 37, Asp55, Phe81, Asp103, and Gln110; that span reads GGH.

Belongs to the methyltransferase superfamily. RsmH family.

It is found in the cytoplasm. The catalysed reaction is cytidine(1402) in 16S rRNA + S-adenosyl-L-methionine = N(4)-methylcytidine(1402) in 16S rRNA + S-adenosyl-L-homocysteine + H(+). Functionally, specifically methylates the N4 position of cytidine in position 1402 (C1402) of 16S rRNA. This Pseudomonas paraeruginosa (strain DSM 24068 / PA7) (Pseudomonas aeruginosa (strain PA7)) protein is Ribosomal RNA small subunit methyltransferase H.